The sequence spans 576 residues: (E,E)-alpha-farnesene synthase (576 aa).

Residues Arg-289, Asp-326, Asp-330, Arg-468, and Asn-471 each contribute to the (2E,6E)-farnesyl diphosphate site. Mg(2+) is bound by residues Asp-326 and Asp-330. Positions 326 to 330 match the DDXXD motif motif; sequence DDVYD. Positions 471, 475, and 479 each coordinate Mg(2+). Asp-484 and Ser-487 together coordinate K(+).

It belongs to the terpene synthase family. Tpsb subfamily. Monomer. Mg(2+) is required as a cofactor. Mn(2+) serves as cofactor. It depends on K(+) as a cofactor.

The protein resides in the cytoplasm. The catalysed reaction is (2E,6E)-farnesyl diphosphate = (3E,6E)-alpha-farnesene + diphosphate. Functionally, sesquiterpene synthase catalyzing the production of (E,E)-alpha-farnesene, the predominant terpene produced during storage of fruits. Produces all six isomers (E,E)-alpha-farnesene, (Z,E)-alpha-farnesene, (E,Z)-alpha-farnesene, (Z,Z)-alpha-farnesene, (E)-beta-farnesene and (Z)-beta-farnesene from a mix of isomeric forms of the farnesyl diphosphate precursor. Able to convert geranyl diphosphate to the monoterpenes (E)-beta-ocimene, linalool and beta-myrcene. Also has a prenyltransferase activity producing alpha-farnesene directly from geranyl diphosphate and isoprenyl diphosphate. This Malus domestica (Apple) protein is (E,E)-alpha-farnesene synthase (AFS1).